The chain runs to 428 residues: Cyclic AMP-responsive element-binding protein 3-like protein 3-A (428 aa).

Over 1 to 286 (MENYSDQGGD…VMNGSNKPVQ (286 aa)) the chain is Cytoplasmic. The span at 67 to 83 (VSGSPVWSPSPSDSGIS) shows a compositional bias: low complexity. The disordered stretch occupies residues 67-104 (VSGSPVWSPSPSDSGISEDPHSDHIDSPPPNASPPMEP). Pro residues predominate over residues 93–103 (SPPPNASPPME). One can recognise a bZIP domain in the interval 210–273 (ILKKIRRKIR…ISLMEQLRRL (64 aa)). The tract at residues 212 to 241 (KKIRRKIRNKQSAQESRKKKKEYIDGLESR) is basic motif. The tract at residues 252–273 (LQRKVFQLEKCNISLMEQLRRL) is leucine-zipper. A helical; Signal-anchor for type II membrane protein transmembrane segment spans residues 287–303 (AGTCVLVLLLSFTLILL). Topologically, residues 304 to 428 (PNLKPFTDTK…SRRSPHADDM (125 aa)) are lumenal. The segment at 381 to 428 (TEYDPESHNHSFDQHDEHHHGDPITGHVATVTLNPRRGSRRSPHADDM) is disordered. Basic and acidic residues predominate over residues 385–402 (PESHNHSFDQHDEHHHGD). The N-linked (GlcNAc...) asparagine glycan is linked to Asn389.

It belongs to the bZIP family. ATF subfamily. In terms of assembly, binds DNA as a dimer. In terms of processing, controlled by regulated intramembrane proteolysis (RIP). A fragment containing the cytoplasmic transcription factor domain is released by proteolysis. The cleavage seems to be performed sequentially by site-1 and site-2 proteases.

The protein localises to the endoplasmic reticulum membrane. It localises to the nucleus. Functionally, transcriptional activator. Binds the cAMP response element (CRE). Activates transcription through box-B element and CRE. Seems to function synergistically with atf6. Regulates FGF21 transcription. The chain is Cyclic AMP-responsive element-binding protein 3-like protein 3-A (creb3l3a) from Danio rerio (Zebrafish).